The primary structure comprises 189 residues: Chitin synthase 2 (189 aa).

Belongs to the chitin synthase family. Class II subfamily.

The protein resides in the cell membrane. It carries out the reaction [(1-&gt;4)-N-acetyl-beta-D-glucosaminyl](n) + UDP-N-acetyl-alpha-D-glucosamine = [(1-&gt;4)-N-acetyl-beta-D-glucosaminyl](n+1) + UDP + H(+). Polymerizes chitin, a structural polymer of the cell wall and septum, by transferring the sugar moiety of UDP-GlcNAc to the non-reducing end of the growing chitin polymer. In Exophiala exophialae (Black yeast-like fungus), this protein is Chitin synthase 2 (CHS2).